A 37-amino-acid chain; its full sequence is MKLRASVRKICSKCRLIRRGKRLYVFCVNARHKQKQG.

It belongs to the bacterial ribosomal protein bL36 family.

It is found in the plastid. The protein localises to the chloroplast. This chain is Large ribosomal subunit protein bL36c, found in Welwitschia mirabilis (Tree tumbo).